The chain runs to 159 residues: Endoribonuclease YbeY (159 aa).

The Zn(2+) site is built by His-125, His-129, and His-135.

This sequence belongs to the endoribonuclease YbeY family. Zn(2+) serves as cofactor.

Its subcellular location is the cytoplasm. Its function is as follows. Single strand-specific metallo-endoribonuclease involved in late-stage 70S ribosome quality control and in maturation of the 3' terminus of the 16S rRNA. The protein is Endoribonuclease YbeY of Brevibacillus brevis (strain 47 / JCM 6285 / NBRC 100599).